The chain runs to 392 residues: F-box/kelch-repeat protein At4g39550 (392 aa).

Residues 1–12 are compositionally biased toward basic residues; it reads MSSPEKKRKTTK. The segment at 1–27 is disordered; sequence MSSPEKKRKTTKKPSPTPQSTTPNPSL. Low complexity predominate over residues 18–27; sequence PQSTTPNPSL. The region spanning 21–67 is the F-box domain; it reads TTPNPSLPDDLVVSCLARVSRLYYPTLSLVSKSFRSLIASPDLYKTR. Kelch repeat units lie at residues 148–194, 195–242, and 244–285; these read NIYN…VVEG, KIYV…KSAV, and EGEI…VVEN.

Part of a SCF (ASK-cullin-F-box) protein ligase complex. Interacts with ASK13 and ASK14.

The protein operates within protein modification; protein ubiquitination. Its function is as follows. Component of SCF(ASK-cullin-F-box) E3 ubiquitin ligase complexes, which may mediate the ubiquitination and subsequent proteasomal degradation of target proteins. This chain is F-box/kelch-repeat protein At4g39550, found in Arabidopsis thaliana (Mouse-ear cress).